The sequence spans 486 residues: Photosystem II CP43 reaction center protein (486 aa).

Residues 1-28 constitute a propeptide that is removed on maturation; that stretch reads MKVFVHGWQHKISHTRILYSLRRFYHVE. Transmembrane regions (helical) follow at residues 82 to 106, 147 to 168, 191 to 213, 268 to 288, and 304 to 325; these read LFEV…PHLA, LIGP…RDKN, KALF…RLIN, KPFA…LSYS, and WYNN…ASQA. Glutamate 380 provides a ligand contact to [CaMn4O5] cluster. A helical transmembrane segment spans residues 460 to 484; sequence RARAAAAGFEKGINRENEAVLSMRP.

Belongs to the PsbB/PsbC family. PsbC subfamily. PSII is composed of 1 copy each of membrane proteins PsbA, PsbB, PsbC, PsbD, PsbE, PsbF, PsbH, PsbI, PsbJ, PsbK, PsbL, PsbM, PsbT, PsbX, PsbY, PsbZ, Psb30/Ycf12, at least 3 peripheral proteins of the oxygen-evolving complex and a large number of cofactors. It forms dimeric complexes. Requires Binds multiple chlorophylls and provides some of the ligands for the Ca-4Mn-5O cluster of the oxygen-evolving complex. It may also provide a ligand for a Cl- that is required for oxygen evolution. PSII binds additional chlorophylls, carotenoids and specific lipids. as cofactor.

It localises to the plastid. Its subcellular location is the chloroplast thylakoid membrane. Functionally, one of the components of the core complex of photosystem II (PSII). It binds chlorophyll and helps catalyze the primary light-induced photochemical processes of PSII. PSII is a light-driven water:plastoquinone oxidoreductase, using light energy to abstract electrons from H(2)O, generating O(2) and a proton gradient subsequently used for ATP formation. This is Photosystem II CP43 reaction center protein from Gracilaria tenuistipitata var. liui (Red alga).